A 172-amino-acid polypeptide reads, in one-letter code: Shikimate kinase (172 aa).

Residue 14 to 19 participates in ATP binding; the sequence is GAGKST. Residue Ser-18 coordinates Mg(2+). Substrate contacts are provided by Asp-36, Arg-60, and Gly-82. Residue Arg-120 participates in ATP binding. Residue Arg-140 participates in substrate binding. Gln-157 is a binding site for ATP.

The protein belongs to the shikimate kinase family. As to quaternary structure, monomer. Mg(2+) serves as cofactor.

The protein resides in the cytoplasm. It carries out the reaction shikimate + ATP = 3-phosphoshikimate + ADP + H(+). The protein operates within metabolic intermediate biosynthesis; chorismate biosynthesis; chorismate from D-erythrose 4-phosphate and phosphoenolpyruvate: step 5/7. In terms of biological role, catalyzes the specific phosphorylation of the 3-hydroxyl group of shikimic acid using ATP as a cosubstrate. This is Shikimate kinase from Colwellia psychrerythraea (strain 34H / ATCC BAA-681) (Vibrio psychroerythus).